The sequence spans 1481 residues: Cystic fibrosis transmembrane conductance regulator (1481 aa).

Over 1–77 (MQRSPLEKAS…KLINALRRCF (77 aa)) the chain is Cytoplasmic. The helical transmembrane segment at 78–98 (FWRFTFYGILLYLGEVTKAVQ) threads the bilayer. One can recognise an ABC transmembrane type-1 1 domain in the interval 81–365 (FTFYGILLYL…WAVQTWYDSL (285 aa)). The Extracellular segment spans residues 99-122 (PLLLGRIIASYDPDNKTERSIAIY). Residues 123 to 146 (LGIGLCLLFIVRTLLLHPAIFGLH) form a helical membrane-spanning segment. At 147–195 (HIGMQMRIAMFSLIYKKTLKLSSRVLDKISIGQLVSLLSNNLNKFDEGL) the chain is on the cytoplasmic side. A helical membrane pass occupies residues 196–216 (ALAHFVWIAPLQVALLMGLIW). Residues 217–222 (ELLQAS) are Extracellular-facing. A helical membrane pass occupies residues 223–243 (AFCGLGFLIVLALFQAGLGRM). Topologically, residues 244–298 (MMKYRDQRAGKINERLVITSEMIENIQSVKAYCWEEAMEKIIENLRQTELKLTRK) are cytoplasmic. Residues 299–319 (AAYVRYFNSSAFFFSGFFVVF) form a helical membrane-spanning segment. The Extracellular portion of the chain corresponds to 320 to 339 (LSVLPYALIKGIVLRKIFTT). Residues 340 to 358 (ISFCIVLRMAVTRQFPWAV) form a helical membrane-spanning segment. Residues 359 to 858 (QTWYDSLGAI…YLRYITLHKS (500 aa)) are Cytoplasmic-facing. Residues tryptophan 401, serine 434, 458–465 (GSTGAGKT), and glutamine 493 contribute to the ATP site. Positions 423-646 (NGDDNLFFSN…RPDFSSKLMG (224 aa)) constitute an ABC transporter 1 domain. A lipid anchor (S-palmitoyl cysteine) is attached at cysteine 524. Serine 549 and serine 660 each carry phosphoserine. Positions 654-831 (SSERRNSILT…EEINEEDLKE (178 aa)) are disordered R region. Position 670 is a phosphoserine; by PKA (serine 670). Residue serine 686 is modified to Phosphoserine. A Glycyl lysine isopeptide (Lys-Gly) (interchain with G-Cter in ubiquitin) cross-link involves residue lysine 688. Serine 700 and serine 712 each carry phosphoserine. A Phosphothreonine modification is found at threonine 717. Phosphoserine is present on residues serine 737, serine 753, serine 768, serine 790, serine 795, and serine 813. The helical transmembrane segment at 859–879 (LIFVLIWCLVIFLAEVAASLV) threads the bilayer. Residues 859–1155 (LIFVLIWCLV…AVNSSIDVDS (297 aa)) enclose the ABC transmembrane type-1 2 domain. Residues 880-918 (VLWLLGNTPFQDKGNSTYSRNNSYAVIITNTSSYYVFYI) lie on the Extracellular side of the membrane. Residues asparagine 894, asparagine 900, and asparagine 909 are each glycosylated (N-linked (GlcNAc...) asparagine). Residues 919 to 939 (YVGVADTLLALGFFRGLPLVH) form a discontinuously helical membrane-spanning segment. Over 940–990 (TLITVSKMLHHKMLHSVLQAPMSTLNTLKAGGILNRFSKDIAILDDLLPLT) the chain is Cytoplasmic. A helical transmembrane segment spans residues 991–1011 (IFDFIQLLLIVIGAIAVVSVL). Topologically, residues 1012-1013 (QP) are extracellular. The chain crosses the membrane as a helical span at residues 1014–1034 (YIFLATVPVIAAFILLRAYFL). The Cytoplasmic segment spans residues 1035–1095 (QTSQQLKQLE…TANWFLYLST (61 aa)). A helical membrane pass occupies residues 1096–1116 (LRWFQMRIEMIFVIFFIAVTF). Residues 1117 to 1130 (ISILTTGEGEGTVG) lie on the Extracellular side of the membrane. A helical membrane pass occupies residues 1131-1151 (IILTLAMNIMSTLQWAVNSSI). Residues 1152 to 1481 (DVDSLMRSVS…TEEEVQETRL (330 aa)) are Cytoplasmic-facing. The 234-residue stretch at 1211 to 1444 (MTIKDLTAKY…KSLFRQAISH (234 aa)) folds into the ABC transporter 2 domain. ATP is bound by residues tyrosine 1220 and 1245 to 1252 (GRTGSGKS). The interaction with GORASP2 stretch occupies residues 1387 to 1481 (RALKQAFADC…TEEEVQETRL (95 aa)). A lipid anchor (S-palmitoyl cysteine) is attached at cysteine 1396. Residues serine 1445 and serine 1457 each carry the phosphoserine modification. A disordered region spans residues 1453–1481 (HRNSSKYKSQPQIASLKEETEEEVQETRL). Positions 1471–1481 (ETEEEVQETRL) are enriched in acidic residues. The short motif at 1479-1481 (TRL) is the PDZ-binding element.

It belongs to the ABC transporter superfamily. ABCC family. CFTR transporter (TC 3.A.1.202) subfamily. Monomer; does not require oligomerization for channel activity. May form oligomers in the membrane. Interacts with SLC26A3, SLC26A6 and NHERF1. Interacts with SHANK2. Interacts with MYO6. Interacts (via C-terminus) with GOPC (via PDZ domain); this promotes CFTR internalization and thereby decreases channel activity. Interacts with SLC4A7 through NHERF1. Found in a complex with MYO5B and RAB11A. Interacts with ANO1. Interacts with SLC26A8. Interacts with AHCYL1; the interaction increases CFTR activity. Interacts with CSE1L. The core-glycosylated form interacts with GORASP2 (via PDZ GRASP-type 1 domain) in respone to ER stress. Interacts with MARCHF2; the interaction leads to CFTR ubiqtuitination and degradation. Interacts with ADGRG2. In terms of processing, N-glycosylated. Post-translationally, phosphorylated; cAMP treatment promotes phosphorylation and activates the channel. Dephosphorylation decreases the ATPase activity (in vitro). Phosphorylation at PKA sites activates the channel. Phosphorylation at PKC sites enhances the response to phosphorylation by PKA. Phosphorylated by AMPK; this inhibits channel activity. Ubiquitinated, leading to its degradation in the lysosome. Deubiquitination by USP10 in early endosomes enhances its endocytic recycling to the cell membrane. Ubiquitinated by RNF185 during ER stress. Ubiquitinated by MARCHF2.

Its subcellular location is the apical cell membrane. The protein resides in the early endosome membrane. The protein localises to the cell membrane. It is found in the recycling endosome membrane. It localises to the endoplasmic reticulum membrane. Its subcellular location is the nucleus. It carries out the reaction ATP + H2O + closed Cl(-) channel = ADP + phosphate + open Cl(-) channel.. It catalyses the reaction chloride(in) = chloride(out). The catalysed reaction is hydrogencarbonate(in) = hydrogencarbonate(out). The enzyme catalyses ATP + H2O = ADP + phosphate + H(+). Functionally, epithelial ion channel that plays an important role in the regulation of epithelial ion and water transport and fluid homeostasis. Mediates the transport of chloride ions across the cell membrane. Possesses an intrinsic ATPase activity and utilizes ATP to gate its channel; the passive flow of anions through the channel is gated by cycles of ATP binding and hydrolysis by the ATP-binding domains. The ion channel is also permeable to HCO(3)(-); selectivity depends on the extracellular chloride concentration. Exerts its function also by modulating the activity of other ion channels and transporters. Contributes to the regulation of the pH and the ion content of the epithelial fluid layer. Modulates the activity of the epithelial sodium channel (ENaC) complex, in part by regulating the cell surface expression of the ENaC complex. May regulate bicarbonate secretion and salvage in epithelial cells by regulating the transporter SLC4A7. Can inhibit the chloride channel activity of ANO1. Plays a role in the chloride and bicarbonate homeostasis during sperm epididymal maturation and capacitation. This is Cystic fibrosis transmembrane conductance regulator from Aotus nancymaae (Ma's night monkey).